Reading from the N-terminus, the 658-residue chain is Carnitine O-palmitoyltransferase 2, mitochondrial (658 aa).

Residues 1–25 (MVARLLLRSWSRGLAVGPGAPCRPL) constitute a mitochondrion transit peptide. The Mitochondrial matrix segment spans residues 26–178 (STGFEPSQYL…DLLEPEVFHL (153 aa)). N6-succinyllysine is present on Lys69. Position 79 is an N6-acetyllysine (Lys79). N6-succinyllysine is present on Lys85. Positions 179-208 (NPAKSDTDTFKRFIRFVPSFLSWYGAYLVN) form an intramembrane region, note=Mitochondrial inner membrane. Residues 209 to 658 (AYPLDMSQYY…DALEGKMIKT (450 aa)) are Mitochondrial matrix-facing. Lys239 carries the N6-acetyllysine; alternate modification. Lys239 carries the post-translational modification N6-succinyllysine; alternate. Catalysis depends on His372, which acts as the Proton acceptor. The residue at position 418 (Lys418) is an N6-acetyllysine; alternate. Residue Lys418 is modified to N6-succinyllysine; alternate. 2 positions are modified to N6-succinyllysine: Lys424 and Lys439. 452–464 (GREFLKKQKLSPD) is a binding site for CoA. Positions 486, 488, and 499 each coordinate (R)-carnitine. Lys510 is subject to N6-acetyllysine; alternate. Residue Lys510 is modified to N6-succinyllysine; alternate.

Belongs to the carnitine/choline acetyltransferase family.

The protein resides in the mitochondrion inner membrane. The enzyme catalyses (R)-carnitine + hexadecanoyl-CoA = O-hexadecanoyl-(R)-carnitine + CoA. It catalyses the reaction octanoyl-CoA + (R)-carnitine = O-octanoyl-(R)-carnitine + CoA. It carries out the reaction decanoyl-CoA + (R)-carnitine = O-decanoyl-(R)-carnitine + CoA. The catalysed reaction is dodecanoyl-CoA + (R)-carnitine = O-dodecanoyl-R-carnitine + CoA. The enzyme catalyses tetradecanoyl-CoA + (R)-carnitine = O-tetradecanoyl-(R)-carnitine + CoA. It catalyses the reaction (R)-carnitine + octadecanoyl-CoA = O-octadecanoyl-(R)-carnitine + CoA. It carries out the reaction eicosanoyl-CoA + (R)-carnitine = O-eicosanoyl-(R)-carnitine + CoA. The catalysed reaction is (9Z)-tetradecenoyl-CoA + (R)-carnitine = O-(9Z)-tetradecenoyl-(R)-carnitine + CoA. The enzyme catalyses (5Z)-tetradecenoyl-CoA + (R)-carnitine = O-(5Z)-tetradecenoyl-(R)-carnitine + CoA. It catalyses the reaction (R)-carnitine + (9Z)-octadecenoyl-CoA = O-(9Z)-octadecenoyl-(R)-carnitine + CoA. It carries out the reaction 4,8-dimethylnonanoyl-CoA + (R)-carnitine = O-4,8-dimethylnonanoyl-(R)-carnitine + CoA. It participates in lipid metabolism; fatty acid beta-oxidation. Its function is as follows. Involved in the intramitochondrial synthesis of acylcarnitines from accumulated acyl-CoA metabolites. Reconverts acylcarnitines back into the respective acyl-CoA esters that can then undergo beta-oxidation, an essential step for the mitochondrial uptake of long-chain fatty acids and their subsequent beta-oxidation in the mitochondrion. Active with medium (C8-C12) and long-chain (C14-C18) acyl-CoA esters. This Bos taurus (Bovine) protein is Carnitine O-palmitoyltransferase 2, mitochondrial (CPT2).